A 229-amino-acid chain; its full sequence is Large ribosomal subunit protein uL1 (229 aa).

Belongs to the universal ribosomal protein uL1 family. Part of the 50S ribosomal subunit.

Its function is as follows. Binds directly to 23S rRNA. The L1 stalk is quite mobile in the ribosome, and is involved in E site tRNA release. Protein L1 is also a translational repressor protein, it controls the translation of the L11 operon by binding to its mRNA. This is Large ribosomal subunit protein uL1 from Haemophilus influenzae (strain PittEE).